The following is a 165-amino-acid chain: Urease accessory protein UreE (165 aa).

This sequence belongs to the UreE family.

Its subcellular location is the cytoplasm. Functionally, involved in urease metallocenter assembly. Binds nickel. Probably functions as a nickel donor during metallocenter assembly. The sequence is that of Urease accessory protein UreE from Micrococcus luteus (strain ATCC 4698 / DSM 20030 / JCM 1464 / CCM 169 / CCUG 5858 / IAM 1056 / NBRC 3333 / NCIMB 9278 / NCTC 2665 / VKM Ac-2230) (Micrococcus lysodeikticus).